The primary structure comprises 260 residues: Transforming acid coiled-coil-containing protein 1 (260 aa).

A disordered region spans residues 1–43 (MSLNTTFTKEDGTEVVIPFNGSQNGHPENEEPEVEEAAEPSSS). Residues 108-249 (ASSEELEKAL…CDQLLNDVDV (142 aa)) adopt a coiled-coil conformation.

The protein belongs to the TACC family. In terms of assembly, interacts with zyg-9 to form a heterodimer. Interacts with zyg-8 to form a heterodimer. Interacts with efa-6 (via N-terminus). As to expression, expressed in touch neurons.

It localises to the cytoplasm. Its subcellular location is the cytoskeleton. It is found in the spindle pole. The protein localises to the microtubule organizing center. The protein resides in the centrosome. It localises to the chromosome. Its subcellular location is the centromere. It is found in the kinetochore. The protein localises to the cell projection. The protein resides in the axon. It localises to the perikaryon. Its function is as follows. Involved in microtubule formation, polymerization and assembly, regulating microtubule nucleation and length. Plays a role in pronuclear migration and mitotic and meiotic spindle elongation during early embryogenesis. In complex with zyg-9, functions during the early stages of embryonic development to regulate microtubule assembly throughout the cell cycle. Specifically, the complex is required for the formation and growth of astral microtubules and spindle microtubules during mitotic spindle assembly. At anaphase, the complex is required for mitotic spindle positioning in one-cell stage embryos. The complex acts in a partially redundant manner with the tac-1/zyg-8 complex to regulate microtubule assembly and processes during interphase, mitosis and meiosis in embryos. Plays a role in injury-induced axonal regrowth, regeneration and microtubule stability in PLM neurons and this may be downstream of efa-6. The polypeptide is Transforming acid coiled-coil-containing protein 1 (Caenorhabditis elegans).